A 130-amino-acid chain; its full sequence is Small ribosomal subunit protein uS11 (130 aa).

Belongs to the universal ribosomal protein uS11 family. As to quaternary structure, part of the 30S ribosomal subunit. Interacts with proteins S7 and S18. Binds to IF-3.

In terms of biological role, located on the platform of the 30S subunit, it bridges several disparate RNA helices of the 16S rRNA. Forms part of the Shine-Dalgarno cleft in the 70S ribosome. The chain is Small ribosomal subunit protein uS11 from Xylella fastidiosa (strain M23).